Here is a 295-residue protein sequence, read N- to C-terminus: Fatty acid desaturase 4-like 1, chloroplastic (295 aa).

A chloroplast-targeting transit peptide spans 1 to 29; it reads MAVSFQTKNPLRPITNIPRSYGPTRVRVT. Helical transmembrane passes span 72–92, 102–122, and 175–195; these read WVAAGSTTIFASFAKSIIGGF, LACYAGYVFADLGSGVYHWAI, and LAINNPLFHSFVSTFAFCILL.

This sequence belongs to the fatty acid desaturase CarF family.

It localises to the plastid. The protein resides in the chloroplast membrane. It functions in the pathway lipid metabolism; fatty acid metabolism. Functionally, fatty acid desaturase involved in the production of chloroplast-specific phosphatidylglycerol molecular species. Catalyzes the formation of a trans double bond introduced close to the carboxyl group of palmitic acid, which is specifically esterified to the sn-2 glyceryl carbon of phosphatidylglycerol. In Arabidopsis thaliana (Mouse-ear cress), this protein is Fatty acid desaturase 4-like 1, chloroplastic (FAD4L1).